The following is a 367-amino-acid chain: Ribosome-binding ATPase YchF (367 aa).

The OBG-type G domain occupies 2-258 (LSAGIVGLPN…LKLEQRQYFL (257 aa)). 11 to 16 (NVGKST) is an ATP binding site. Positions 15 and 35 each coordinate Mg(2+). The region spanning 281-364 (NLWSFFTFGK…KDGDVCNFKF (84 aa)) is the TGS domain.

This sequence belongs to the TRAFAC class OBG-HflX-like GTPase superfamily. OBG GTPase family. YchF/OLA1 subfamily. Mg(2+) serves as cofactor.

In terms of biological role, ATPase that binds to both the 70S ribosome and the 50S ribosomal subunit in a nucleotide-independent manner. The protein is Ribosome-binding ATPase YchF of Mycoplasma genitalium (strain ATCC 33530 / DSM 19775 / NCTC 10195 / G37) (Mycoplasmoides genitalium).